The primary structure comprises 415 residues: Arrestin domain-containing protein 4 (415 aa).

2 consecutive short sequence motifs (PPxY motif) follow at residues 347–350 and 392–395; these read PPNY and PPLY.

This sequence belongs to the arrestin family. In terms of assembly, interacts with ADRB2. Interacts (via PPxY motifs) with ITCH, NEDD4L and WWP2. Interacts with AVPR2. Identified in a complex containing at least ARRDC4, AVPR2 and HGS. Interacts with SLC11A2; controls the incorporation of SLC11A2 into extracellular vesicles through an ubiquitination-dependent mechanism. Interacts with TRIM65.

It localises to the early endosome. Its subcellular location is the cell membrane. It is found in the cytoplasmic vesicle. Functions as an adapter recruiting ubiquitin-protein ligases to their specific substrates. Plays a role in endocytosis of activated G protein-coupled receptors (GPCRs). Through an ubiquitination-dependent mechanism also plays a role in the incorporation of SLC11A2 into extracellular vesicles. May play a role in glucose uptake. Participates in innate immune response by promoting IFIH1/MDA5 activation through interaction with TRIM65. The chain is Arrestin domain-containing protein 4 from Mus musculus (Mouse).